We begin with the raw amino-acid sequence, 296 residues long: Acetylglutamate kinase (296 aa).

Substrate contacts are provided by residues 67–68 (GG), Arg-89, and Asn-194.

Belongs to the acetylglutamate kinase family. ArgB subfamily.

The protein localises to the cytoplasm. The enzyme catalyses N-acetyl-L-glutamate + ATP = N-acetyl-L-glutamyl 5-phosphate + ADP. It functions in the pathway amino-acid biosynthesis; L-arginine biosynthesis; N(2)-acetyl-L-ornithine from L-glutamate: step 2/4. Functionally, catalyzes the ATP-dependent phosphorylation of N-acetyl-L-glutamate. This chain is Acetylglutamate kinase, found in Syntrophus aciditrophicus (strain SB).